A 180-amino-acid polypeptide reads, in one-letter code: Ribulose bisphosphate carboxylase small subunit, chloroplastic 1 (180 aa).

Residues Met-1 to Gln-56 constitute a chloroplast transit peptide.

The protein belongs to the RuBisCO small chain family. Heterohexadecamer of 8 large and 8 small subunits.

It is found in the plastid. The protein localises to the chloroplast. In terms of biological role, ruBisCO catalyzes two reactions: the carboxylation of D-ribulose 1,5-bisphosphate, the primary event in carbon dioxide fixation, as well as the oxidative fragmentation of the pentose substrate. Both reactions occur simultaneously and in competition at the same active site. Although the small subunit is not catalytic it is essential for maximal activity. The sequence is that of Ribulose bisphosphate carboxylase small subunit, chloroplastic 1 from Nicotiana sylvestris (Wood tobacco).